The chain runs to 364 residues: MKVGDRHYHTIWLNEDGRSVDIIDQRWLPHEFRVVTLKTIADIAVAIRDMWVRGAPLIGVTAAYGVAIAMAEDPSDTHLDSVWEELHETRPTAINLRWALNAMREHLRALPEQERAEAAYQRAAEIAEEDIELNRAIGANGLKVIREIAARKKPGEPVKILTHCNAGWLATVDYGTATAPIYMAVEEGLPVHVYVDETRPRNQGAYLTAWEMNGHGVPHTLIVDNAGGHLMQHGDVDLVIVGTDRTTANGDVCNKIGTYLKALAARDNGIPFYVALPSPTIDWTVHDGVKEIPIEERAGEEVSFVQGRAPDGSIASVRISPEGSPAANPAFDVTPARLITGLITERGVADASPEGLKALFPERS.

Residues 53-55 (RGA), R90, and Q203 each bind substrate. The active-site Proton donor is D244. 254 to 255 (NK) contributes to the substrate binding site.

The protein belongs to the eIF-2B alpha/beta/delta subunits family. MtnA subfamily.

It carries out the reaction 5-(methylsulfanyl)-alpha-D-ribose 1-phosphate = 5-(methylsulfanyl)-D-ribulose 1-phosphate. It functions in the pathway amino-acid biosynthesis; L-methionine biosynthesis via salvage pathway; L-methionine from S-methyl-5-thio-alpha-D-ribose 1-phosphate: step 1/6. In terms of biological role, catalyzes the interconversion of methylthioribose-1-phosphate (MTR-1-P) into methylthioribulose-1-phosphate (MTRu-1-P). The chain is Methylthioribose-1-phosphate isomerase from Sinorhizobium medicae (strain WSM419) (Ensifer medicae).